The primary structure comprises 308 residues: Protein UL135 (308 aa).

The first 22 residues, 1 to 22, serve as a signal peptide directing secretion; it reads MVWLWLGVGLLGGTGLASLVLA. Residues 105-274 form a disordered region; that stretch reads KPEFPPARFE…TEPTTLPIVS (170 aa). Low complexity predominate over residues 126-145; the sequence is SIGRSPSHCSSSSSLSSSAS. 2 stretches are compositionally biased toward pro residues: residues 152–163 and 219–238; these read QPPPSWKPPPPP and PVTPRPFPKTPTPQKPPRNP.

This sequence belongs to the HCMV UL135 family. Interacts with host components of the WAVE2 complex ABI1, NAP1 and WAVE2. Also interacts with host ABI2 and TLN1.

Its subcellular location is the host cell membrane. It localises to the host Golgi apparatus. In terms of biological role, remodels the host actin cytoskeleton in order to impair immune recognition of infected cells. Mechanistically, interacts with members of the host WAVE2 complex and redirects the complex to the plasma membrane. In turn, the efficiency of immune synapse formation is greatly reduced. The protein is Protein UL135 (UL135) of Human cytomegalovirus (strain Merlin) (HHV-5).